The primary structure comprises 387 residues: Cell surface GPI-anchored protein ARB_01627 (387 aa).

The first 19 residues, 1-19 (MAITKYLVSALAVAGLAFA), serve as a signal peptide directing secretion. N-linked (GlcNAc...) asparagine glycosylation is found at asparagine 73, asparagine 175, asparagine 201, asparagine 206, asparagine 231, asparagine 236, asparagine 253, and asparagine 270. The segment covering 338-361 (TCRERQEKPKTGDDHSGGDEEGHK) has biased composition (basic and acidic residues). The disordered stretch occupies residues 338-362 (TCRERQEKPKTGDDHSGGDEEGHKG). A lipid anchor (GPI-anchor amidated alanine) is attached at alanine 364. The propeptide at 365 to 387 (AAFAKAPAAALLIAFVGALQFFL) is removed in mature form.

The protein belongs to the SPS2 family. In terms of processing, the GPI-anchor is attached to the protein in the endoplasmic reticulum and serves to target the protein to the cell surface. There, the glucosamine-inositol phospholipid moiety is cleaved off and the GPI-modified mannoprotein is covalently attached via its lipidless GPI glycan remnant to the 1,6-beta-glucan of the outer cell wall layer.

It localises to the cell membrane. It is found in the secreted. The protein localises to the cell wall. Functionally, required for proper cell wall integrity and for the correct assembly of the mannoprotein outer layer of the cell wall. This is Cell surface GPI-anchored protein ARB_01627 from Arthroderma benhamiae (strain ATCC MYA-4681 / CBS 112371) (Trichophyton mentagrophytes).